The primary structure comprises 88 residues: C-C motif chemokine 18 (88 aa).

The signal sequence occupies residues 1 to 19; the sequence is MKGLAAALLVLCTVALCSC. 2 disulfides stabilise this stretch: Cys29-Cys53 and Cys30-Cys69.

Belongs to the intercrine beta (chemokine CC) family. Post-translationally, the Cys-29/Cys-53 disulfide bond is required for activity.

It is found in the secreted. In terms of biological role, chemotactic factor that attracts lymphocytes but not monocytes or granulocytes. May be involved in B-cell migration into B-cell follicles in lymph nodes. Attracts naive T-lymphocytes toward dendritic cells and activated macrophages in lymph nodes, has chemotactic activity for naive T-cells, CD4+ and CD8+ T-cells and thus may play a role in both humoral and cell-mediated immunity responses. In Macaca mulatta (Rhesus macaque), this protein is C-C motif chemokine 18 (CCL18).